A 1355-amino-acid polypeptide reads, in one-letter code: Phospholipid-transporting ATPase DRS2 (1355 aa).

Residues M1–E15 are compositionally biased toward basic and acidic residues. The tract at residues M1–P50 is disordered. The tract at residues M1–R104 is involved in autoinhibition. The Cytoplasmic portion of the chain corresponds to M1–E221. Over residues D16–D26 the composition is skewed to acidic residues. A compositionally biased stretch (polar residues) spans S30–N44. S102 bears the Phosphoserine mark. The helical transmembrane segment at F222 to V242 threads the bilayer. An involved in phosphatidylserine substrate recognition region spans residues Q237–Q238. Residues S243–N246 are Lumenal-facing. A helical membrane pass occupies residues R247–I267. The Cytoplasmic segment spans residues E268–I449. The helical transmembrane segment at A450 to S470 threads the bilayer. The Lumenal segment spans residues T471–L490. A helical transmembrane segment spans residues F491–F511. Residues V512–I1012 are Cytoplasmic-facing. Catalysis depends on D560, which acts as the 4-aspartylphosphate intermediate. ATP is bound by residues D560, K561, T562, E655, F698, S700, K703, K721, R755, T756, T835, G836, D837, R928, and K934. D560 provides a ligand contact to Mg(2+). T562 is a Mg(2+) binding site. A Mg(2+)-binding site is contributed by D954. The ATP site is built by N957 and D958. D958 lines the Mg(2+) pocket. The helical transmembrane segment at L1013–N1033 threads the bilayer. The Lumenal portion of the chain corresponds to A1034 to S1043. The helical transmembrane segment at W1044–F1064 threads the bilayer. At D1065–F1094 the chain is on the cytoplasmic side. Residues W1095–I1115 form a helical membrane-spanning segment. Topologically, residues Y1116–H1131 are lumenal. A helical membrane pass occupies residues W1132 to L1152. K1149 lines the a 1,2-diacyl-sn-glycero-3-phospho-(1D-myo-inositol 4-phosphate) pocket. Over V1153–T1161 the chain is Cytoplasmic. The helical transmembrane segment at L1162 to I1182 threads the bilayer. Over F1183–S1202 the chain is Lumenal. The helical transmembrane segment at G1203 to W1223 threads the bilayer. R1219, W1223, K1224, Y1235, and H1236 together coordinate a 1,2-diacyl-sn-glycero-3-phospho-(1D-myo-inositol 4-phosphate). Over K1224–I1355 the chain is Cytoplasmic. The tract at residues Y1230–E1282 is interaction with GEA2. Positions E1231–A1309 are involved in autoinhibition. Positions Q1305–I1355 are disordered. Residues A1307–F1323 show a composition bias toward polar residues. A compositionally biased stretch (basic and acidic residues) spans S1346–I1355.

This sequence belongs to the cation transport ATPase (P-type) (TC 3.A.3) family. Type IV subfamily. Component of a flippase complex consisting of DRS2 and CDC50. Interacts with CDC50; the interaction is direct, is required for their mutual export from the endoplasmic reticulum, and preferentially occurs when DRS2 is in the E2P state. Interacts (via C-terminus) with GEA2 (via SEC7 domain); the interaction is direct. Interacts with GEA1. Requires Mg(2+) as cofactor.

It is found in the golgi apparatus. Its subcellular location is the trans-Golgi network membrane. The protein localises to the endosome membrane. The enzyme catalyses ATP + H2O + phospholipidSide 1 = ADP + phosphate + phospholipidSide 2.. It catalyses the reaction a 1,2-diacyl-sn-glycero-3-phospho-L-serine(out) + ATP + H2O = a 1,2-diacyl-sn-glycero-3-phospho-L-serine(in) + ADP + phosphate + H(+). The catalysed reaction is a 1,2-diacyl-sn-glycero-3-phosphoethanolamine(out) + ATP + H2O = a 1,2-diacyl-sn-glycero-3-phosphoethanolamine(in) + ADP + phosphate + H(+). Its activity is regulated as follows. Allosterically activated by binding 1,2-diacyl-sn-glycero-3-phospho-(1D-myo-inositol 4-phosphate) (phosphatidylinositol 4-phosphate). Inhibited by orthovanadate, N-ethylmaleimide, trifluoroberyllate and tetrafluoroaluminate; orthovanadate and N-ethylmaleimide inhibit phosphorylation of the active site aspartic acid. The ATPase activity is not potently stimulated by phosphatidylinositol 3-phosphate and phosphatidylinositol 5-phosphate, phosphatidylinositol 4,5-bisphosphate or phosphatidylcholine. Not inhibited by azide. Functionally, catalytic component of a P4-ATPase flippase complex which catalyzes the hydrolysis of ATP coupled to the transport of phosphatidylserine and small amounts of ethanolamine from the lumen to the cytosolic leaflet of the trans-Golgi network and ensures the maintenance of asymmetric distribution of phospholipids. Contributes to clathrin-coated vesicle formation, endocytosis, and protein trafficking between the Golgi and endosomal system. Does not appear to transport phosphatidylcholine or sphingomyelin. This is Phospholipid-transporting ATPase DRS2 from Saccharomyces cerevisiae (strain ATCC 204508 / S288c) (Baker's yeast).